A 424-amino-acid chain; its full sequence is Protein CLP1 homolog 5 (424 aa).

Residues Glu16, Thr56, and 124-129 contribute to the ATP site; that span reads DSGKST.

The protein belongs to the Clp1 family. Clp1 subfamily. Forms a complex with cleavage and polyadenylation specificity factor (CPSF) subunits PCFS1, FIPS3 and CPSF30.

Its subcellular location is the nucleus. Required for endonucleolytic cleavage during polyadenylation-dependent pre-mRNA 3'-end formation. The sequence is that of Protein CLP1 homolog 5 from Arabidopsis thaliana (Mouse-ear cress).